A 46-amino-acid polypeptide reads, in one-letter code: Alpha-1-antiproteinase (46 aa).

Position 30 is a phosphoserine (Ser30).

This sequence belongs to the serpin family. In terms of processing, N-glycosylated; contains bi- and triantennary glycans with a bisecting N-acetylglucosamine and fucose residue. In terms of tissue distribution, plasma.

It localises to the secreted. This is Alpha-1-antiproteinase from Notamacropus eugenii (Tammar wallaby).